The primary structure comprises 237 residues: MRPRLLVSPVNRDEALEAVEGGAHIIDVKNPEEGSLGANFPWVIREIMEVVPEDREVSATVGDVPYKPGTVAQAVLGVAAVGVDYAKVGLYGTKTEEEALEVMRACSRAVREFGYDTRVVAAGYADAHRVGSLDPMSVPEVAAEAECDVAMVDTAVKDGKRLFDFLSEEEVGEFVDSAHEHGLEVALAGSLRHEDMPIVRDLGADIVGVRGAACERGDRNRGAIRSHLVRKLAEALA.

K29 serves as the catalytic Schiff-base intermediate with substrate. Catalysis depends on K87, which acts as the Proton acceptor.

It belongs to the MfnB family.

It carries out the reaction 2 D-glyceraldehyde 3-phosphate = 4-(hydroxymethyl)-2-furancarboxaldehyde phosphate + phosphate + 2 H2O. Its pathway is cofactor biosynthesis; methanofuran biosynthesis. In terms of biological role, catalyzes the formation of 4-(hydroxymethyl)-2-furancarboxaldehyde phosphate (4-HFC-P) from two molecules of glyceraldehyde-3-P (GA-3-P). The polypeptide is (5-formylfuran-3-yl)methyl phosphate synthase (Methanopyrus kandleri (strain AV19 / DSM 6324 / JCM 9639 / NBRC 100938)).